A 275-amino-acid chain; its full sequence is 6-deoxy-6-sulfo-D-fructose transketolase subunit SqwG (275 aa).

The protein belongs to the transketolase family. As to quaternary structure, forms a complex with SqwH. Thiamine diphosphate serves as cofactor.

It catalyses the reaction 6-deoxy-6-sulfo-D-fructose + D-glyceraldehyde 3-phosphate = 4-deoxy-4-sulfo-D-erythrose + D-xylulose 5-phosphate. It carries out the reaction 4-deoxy-4-sulfo-D-erythrulose + D-glyceraldehyde 3-phosphate = sulfoacetaldehyde + D-xylulose 5-phosphate. Part of the sulfo-TK pathway, a D-sulfoquinovose degradation pathway that produces 2-hydroxyethane-1-sulfonate (isethionate). Catalyzes two steps of the pathway: the formation of 4-deoxy-4-sulfoerythrose (SE) and xylulose 5-phosphate from 6-deoxy-6-sulfo-D-fructose (SF) and glyceraldehyde 3-phosphate, and the formation of sulfoacetaldehyde (SA) and xylulose 5-phosphate from 4-deoxy-4-sulfo-D-erythrulose (SEu) and glyceraldehyde 3-phosphate. The chain is 6-deoxy-6-sulfo-D-fructose transketolase subunit SqwG from Clostridium sp. (strain MSTE9).